A 137-amino-acid chain; its full sequence is Large ribosomal subunit protein uL16 (137 aa).

It belongs to the universal ribosomal protein uL16 family. As to quaternary structure, part of the 50S ribosomal subunit.

Its function is as follows. Binds 23S rRNA and is also seen to make contacts with the A and possibly P site tRNAs. The sequence is that of Large ribosomal subunit protein uL16 from Pseudomonas fluorescens (strain Pf0-1).